We begin with the raw amino-acid sequence, 66 residues long: UPF0337 protein BA_0987/GBAA_0987/BAS0923 (66 aa).

The segment at 1–22 (MSESGLKEQITGKVEKTKGQVK) is disordered. A compositionally biased stretch (basic and acidic residues) spans 13–22 (KVEKTKGQVK).

This sequence belongs to the UPF0337 (CsbD) family.

In Bacillus anthracis, this protein is UPF0337 protein BA_0987/GBAA_0987/BAS0923.